The following is a 429-amino-acid chain: Histidine--tRNA ligase (429 aa).

This sequence belongs to the class-II aminoacyl-tRNA synthetase family. Homodimer.

It is found in the cytoplasm. It catalyses the reaction tRNA(His) + L-histidine + ATP = L-histidyl-tRNA(His) + AMP + diphosphate + H(+). The chain is Histidine--tRNA ligase from Pseudomonas aeruginosa (strain LESB58).